Consider the following 418-residue polypeptide: PP2A regulatory subunit TAP46 (418 aa).

The interval 367-418 (KMIQESNSAWHKDGSRSAQEDEDAEEEKARAWDDWKDDNPRGAGNKKLTPCG) is disordered. Basic and acidic residues-rich tracts occupy residues 376 to 385 (WHKDGSRSAQ) and 393 to 406 (EKAR…DDNP).

It belongs to the IGBP1/TAP42 family.

Its function is as follows. Involved in the regulation of the TOR signaling pathway. Seems to act as a regulator of PP2A catalytic activity. This chain is PP2A regulatory subunit TAP46, found in Oryza sativa subsp. japonica (Rice).